Here is a 464-residue protein sequence, read N- to C-terminus: MALLTAAARLFGAKNASCLVLAARHASASSTNLKDILADLIPKEQARIKTFRQQHGNTVVGQITVDMMYGGMRGMKGLVYETSVLDPDEGIRFRGYSIPECQKMLPKAKGGEEPLPEGLFWLLVTGQIPTEEQVSWLSKEWAKRAALPSHVVTMLDNFPTNLHPMSQLSAAITALNSESNFARAYAEGIHRTKYWELIYEDCMDLIAKLPCVAAKIYRNLYREGSSIGAIDSKLDWSHNFTNMLGYTDAQFTELMRLYLTIHSDHEGGNVSAHTSHLVGSALSDPYLSFAAAMNGLAGPLHGLANQEVLVWLTQLQKEVGKDVSDEKLRDYIWNTLNSGRVVPGYGHAVLRKTDPRYTCQREFALKHLPHDPMFKLVAQLYKIVPNVLLEQGKAKNPWPNVDAHSGVLLQYYGMTEMNYYTVLFGVSRALGVLAQLIWSRALGFPLERPKSMSTDGLIKLVDSK.

A mitochondrion-targeting transit peptide spans 1-27 (MALLTAAARLFGAKNASCLVLAARHAS). The short motif at 2 to 21 (ALLTAAARLFGAKNASCLVL) is the SIFI-degron element. Position 76 is an N6-acetyllysine; alternate (K76). An N6-succinyllysine; alternate modification is found at K76. An N6-succinyllysine mark is found at K103 and K193. S226 is modified (phosphoserine). Residue H301 is part of the active site. K321 and K327 each carry N6-acetyllysine; alternate. Residues K321 and K327 each carry the N6-succinyllysine; alternate modification. H347 is an active-site residue. R356 lines the oxaloacetate pocket. Position 375 is an N6-acetyllysine; alternate (K375). An N6-succinyllysine; alternate modification is found at K375. K382 is modified (N6-acetyllysine). An N6-acetyllysine; alternate modification is found at K393. K393 carries the post-translational modification N6-succinyllysine; alternate. An N6,N6,N6-trimethyllysine modification is found at K395. D402 is a catalytic residue. 2 residues coordinate oxaloacetate: R428 and R448. K450 carries the N6-succinyllysine modification. Residue K459 is modified to N6-acetyllysine; alternate. N6-succinyllysine; alternate is present on K459.

Belongs to the citrate synthase family. As to quaternary structure, homodimer. In terms of processing, methylated. Trimethylation at Lys-395 by CSKMT decreases citrate synthase activity. Post-translationally, in response to mitochondrial stress, the precursor protein is ubiquitinated by the SIFI complex in the cytoplasm before mitochondrial import, leading to its degradation. Within the SIFI complex, UBR4 initiates ubiquitin chain that are further elongated or branched by KCMF1.

The protein resides in the mitochondrion matrix. It catalyses the reaction oxaloacetate + acetyl-CoA + H2O = citrate + CoA + H(+). It functions in the pathway carbohydrate metabolism; tricarboxylic acid cycle; isocitrate from oxaloacetate: step 1/2. Key enzyme of the Krebs tricarboxylic acid cycle which catalyzes the synthesis of citrate from acetyl coenzyme A and oxaloacetate. The sequence is that of Citrate synthase, mitochondrial (CS) from Sus scrofa (Pig).